The chain runs to 344 residues: Nuclear distribution protein nudE homolog 1 (344 aa).

A self-association region spans residues 1–93 (MEDSGKTFGS…MQHSEGYRQI (93 aa)). Positions 18–188 (WRDLAMTYKQ…ELAVQQKQDK (171 aa)) form a coiled coil. The segment covering 30 to 47 (ENTQEELREFQEGSREYE) has biased composition (basic and acidic residues). The disordered stretch occupies residues 30 to 65 (ENTQEELREFQEGSREYEAELETQLQQAETRNRDLL). An interaction with PAFAH1B1 region spans residues 88–156 (EGYRQISALE…ERNAFLESEL (69 aa)). Residues 167–290 (QRLKDEARDL…QSPSRKSGPA (124 aa)) form an interaction with CENPF region. Positions 181-243 (AVQQKQDKPR…CGLGSPSSGT (63 aa)) are disordered. A compositionally biased stretch (polar residues) spans 208 to 230 (ATGSAPSTPITHQGSSSGLNTPE). A Phosphoserine modification is found at Ser211. Residues Thr215, Thr228, Thr243, and Thr246 each carry the phosphothreonine modification. The S-palmitoyl cysteine; by ZDHHC2, ZDHHC3 and ZDHHC7 moiety is linked to residue Cys274. The interval 279–337 (YDQSPSRKSGPALGRGTKNRDGIDRRPGSTAVGDKGSGKRLEFAKPSSQLSSPALPSTQ) is disordered. At Ser282 the chain carries Phosphoserine. Basic and acidic residues predominate over residues 296-305 (KNRDGIDRRP). Over residues 324–335 (PSSQLSSPALPS) the composition is skewed to low complexity.

It belongs to the nudE family. Homodimer. Interacts with CNTRL, LIS1, dynein, SLMAP and TCP1. Interacts with CENPF, dynactin, tubulin gamma, PAFAH1B1, PCM1 and PCNT. Interacts with ZNF365. Interacts with GTP-bound RAB9A and RAB9B; the interaction leads to RAB9-dynein motor tethering. Interacts (via C-terminus) with MCRS1 (via C-terminus); phosphorylation of NDE1 inhibits the interaction. Phosphorylated in mitosis. Phosphorylation at Thr-246 is essential for the G2/M transition. In terms of tissue distribution, expressed in brain, heart, kidney, liver, lung, skeletal muscle, spleen and testis.

It localises to the cytoplasm. It is found in the cytoskeleton. The protein localises to the microtubule organizing center. Its subcellular location is the centrosome. The protein resides in the spindle. It localises to the chromosome. It is found in the centromere. The protein localises to the kinetochore. Its subcellular location is the cleavage furrow. The protein resides in the cytoplasmic vesicle membrane. Functionally, required for centrosome duplication and formation and function of the mitotic spindle. Essential for the development of the cerebral cortex. May regulate the production of neurons by controlling the orientation of the mitotic spindle during division of cortical neuronal progenitors of the proliferative ventricular zone of the brain. Orientation of the division plane perpendicular to the layers of the cortex gives rise to two proliferative neuronal progenitors whereas parallel orientation of the division plane yields one proliferative neuronal progenitor and a postmitotic neuron. A premature shift towards a neuronal fate within the progenitor population may result in an overall reduction in the final number of neurons and an increase in the number of neurons in the deeper layers of the cortex. Acts as a RAB9A/B effector that tethers RAB9-associated late endosomes to the dynein motor for their retrograde transport to the trans-Golgi network. The sequence is that of Nuclear distribution protein nudE homolog 1 from Rattus norvegicus (Rat).